The primary structure comprises 239 residues: Probable transcriptional regulatory protein CD630_07950 (239 aa).

Belongs to the TACO1 family.

It is found in the cytoplasm. In Clostridioides difficile (strain 630) (Peptoclostridium difficile), this protein is Probable transcriptional regulatory protein CD630_07950.